Here is a 1220-residue protein sequence, read N- to C-terminus: Deubiquitinating protein VCPIP1 (1220 aa).

The segment covering 1–19 has biased composition (pro residues); that stretch reads MSQPPPPPPLPPPPPPPEA. The segment at 1-40 is disordered; that stretch reads MSQPPPPPPLPPPPPPPEAPQTSSSLAAAASPGGLSKRRD. Residues 20–35 are compositionally biased toward low complexity; sequence PQTSSSLAAAASPGGL. The OTU domain maps to 207 to 360; it reads LIPVHVDGDG…RNHYIPLVGI (154 aa). D215 is a catalytic residue. C218 serves as the catalytic Nucleophile. H353 is a catalytic residue. K407 is subject to N6-acetyllysine. 2 disordered regions span residues 724–778 and 988–1008; these read SVMQ…KIRI and EATTRSRESSPSHGLLKLGSG. Phosphoserine occurs at positions 746 and 756. Over residues 754 to 770 the composition is skewed to low complexity; that stretch reads PSSAPATPTKAPYSPTT. At T762 the chain carries Phosphothreonine. Phosphoserine is present on residues S767, S993, S997, and S1076. Disordered stretches follow at residues 1113 to 1140 and 1185 to 1220; these read SSIQASMDKHLRDQSAEQAPSDLSQRKV and FATRSKAQKENSMEEPEEMDSQDAETTNTTEPMDHS. Phosphoserine is present on residues S1196 and S1205. Acidic residues predominate over residues 1197–1207; that stretch reads MEEPEEMDSQD. Positions 1208 to 1220 are enriched in polar residues; it reads AETTNTTEPMDHS.

In terms of assembly, binds VCP and the ternary complex containing STX5A, NSFL1C and VCP. Phosphorylated at Ser-1205 by ATM or ATR following induction of covalent DNA-protein cross-links (DPCs).

It is found in the nucleus. It localises to the cytoplasm. Its subcellular location is the endoplasmic reticulum. The protein resides in the golgi apparatus. The protein localises to the golgi stack. The catalysed reaction is Thiol-dependent hydrolysis of ester, thioester, amide, peptide and isopeptide bonds formed by the C-terminal Gly of ubiquitin (a 76-residue protein attached to proteins as an intracellular targeting signal).. Deubiquitinating enzyme involved in DNA repair and reassembly of the Golgi apparatus and the endoplasmic reticulum following mitosis. Necessary for VCP-mediated reassembly of Golgi stacks after mitosis. Plays a role in VCP-mediated formation of transitional endoplasmic reticulum (tER). Mediates dissociation of the ternary complex containing STX5A, NSFL1C and VCP. Also involved in DNA repair following phosphorylation by ATM or ATR: acts by catalyzing deubiquitination of SPRTN, thereby promoting SPRTN recruitment to chromatin and subsequent proteolytic cleavage of covalent DNA-protein cross-links (DPCs). Hydrolyzes 'Lys-11'- and 'Lys-48'-linked polyubiquitin chains. This is Deubiquitinating protein VCPIP1 from Mus musculus (Mouse).